The chain runs to 557 residues: Probable WRKY transcription factor 20 (557 aa).

The span at 1–12 (MNPQANDRKEFQ) shows a compositional bias: basic and acidic residues. 2 disordered regions span residues 1–36 (MNPQ…GGGA) and 76–215 (KPEP…DGYN). The segment covering 95-114 (SASSSSYTGRGFHQNTFTEQ) has biased composition (polar residues). The span at 151 to 169 (SSHSPSSISDAAGSSSELS) shows a compositional bias: low complexity. Residues 193–207 (SIQTSQNDSRGSTPS) show a composition bias toward polar residues. A DNA-binding region (WRKY 1) is located at residues 205 to 269 (TPSILADDGY…YKGTHDHPKP (65 aa)). Residues C236, C241, H264, and H266 each coordinate Zn(2+). Positions 257 to 348 (DIIYKGTHDH…PDDDDPFSKR (92 aa)) are disordered. The segment covering 282–299 (QEERLDKYPSSTGRDEKG) has biased composition (basic and acidic residues). Positions 303-314 (YNLSNPNEQTGN) are enriched in polar residues. Over residues 321–332 (SASDDGGEAAAS) the composition is skewed to low complexity. Residues 375 to 440 (SEVDILDDGY…YEGKHDHDVP (66 aa)) constitute a DNA-binding region (WRKY 2). Residues C406, C411, H435, and H437 each contribute to the Zn(2+) site. Disordered stretches follow at residues 433–486 (GKHD…QHQN) and 520–557 (NQYG…QSGP). Residues 520-536 (NQYGQRETKNETQNGDI) show a composition bias toward polar residues.

It belongs to the WRKY group I family.

The protein resides in the nucleus. Functionally, transcription factor. Interacts specifically with the W box (5'-(T)TGAC[CT]-3'), a frequently occurring elicitor-responsive cis-acting element. The chain is Probable WRKY transcription factor 20 (WRKY20) from Arabidopsis thaliana (Mouse-ear cress).